Consider the following 160-residue polypeptide: N-acetyltransferase Pat (160 aa).

The region spanning 5-148 (IKIRKATKED…VYGEMRLTER (144 aa)) is the N-acetyltransferase domain. Residues Leu79, Val81, Thr87, Gly89, Gly91, Thr92, Asn118, Lys123, and Lys127 each coordinate CoA.

Belongs to the acetyltransferase family. GNAT subfamily.

It carries out the reaction L-lysyl-[protein] + acetyl-CoA = N(6)-acetyl-L-lysyl-[protein] + CoA + H(+). Its function is as follows. Modulates activity of albA1, the major archaeal DNA compaction protein, by decreasing albA1's nucleic acid binding affinity through acetylation of 'Lys-16'. The polypeptide is N-acetyltransferase Pat (Saccharolobus solfataricus (strain ATCC 35092 / DSM 1617 / JCM 11322 / P2) (Sulfolobus solfataricus)).